Here is a 290-residue protein sequence, read N- to C-terminus: Arylamine N-acetyltransferase 2 (290 aa).

The active-site Acyl-thioester intermediate is Cys68. Residues Ser103 and Gly104 each coordinate CoA. 106–107 (IH) provides a ligand contact to substrate. Catalysis depends on residues His107 and Asp122. Tyr208 lines the CoA pocket.

It belongs to the arylamine N-acetyltransferase family.

Its subcellular location is the cytoplasm. The enzyme catalyses an arylamine + acetyl-CoA = an N-acetylarylamine + CoA. It carries out the reaction an N-hydroxyarylamine + acetyl-CoA = an N-acetoxyarylamine + CoA. Functionally, catalyzes the N- or O-acetylation of various arylamine and heterocyclic amine substrates, and participates in the detoxification of a plethora of hydrazine and arylamine drugs. The polypeptide is Arylamine N-acetyltransferase 2 (NAT2) (Mesocricetus auratus (Golden hamster)).